The primary structure comprises 127 residues: Aspartate 1-decarboxylase (127 aa).

Ser25 serves as the catalytic Schiff-base intermediate with substrate; via pyruvic acid. Ser25 bears the Pyruvic acid (Ser) mark. Residue Thr57 coordinates substrate. Catalysis depends on Tyr58, which acts as the Proton donor. Substrate is bound at residue Gly73–Ala75.

Belongs to the PanD family. Heterooctamer of four alpha and four beta subunits. The cofactor is pyruvate. Post-translationally, is synthesized initially as an inactive proenzyme, which is activated by self-cleavage at a specific serine bond to produce a beta-subunit with a hydroxyl group at its C-terminus and an alpha-subunit with a pyruvoyl group at its N-terminus.

Its subcellular location is the cytoplasm. It carries out the reaction L-aspartate + H(+) = beta-alanine + CO2. Its pathway is cofactor biosynthesis; (R)-pantothenate biosynthesis; beta-alanine from L-aspartate: step 1/1. Functionally, catalyzes the pyruvoyl-dependent decarboxylation of aspartate to produce beta-alanine. In Trichormus variabilis (strain ATCC 29413 / PCC 7937) (Anabaena variabilis), this protein is Aspartate 1-decarboxylase.